Here is a 120-residue protein sequence, read N- to C-terminus: Glycine cleavage system H protein (120 aa).

The region spanning 17-99 (VATVGITAHA…QGGGWLYRLK (83 aa)) is the Lipoyl-binding domain. Lys-58 is subject to N6-lipoyllysine.

This sequence belongs to the GcvH family. As to quaternary structure, the glycine cleavage system is composed of four proteins: P, T, L and H. The cofactor is (R)-lipoate.

The glycine cleavage system catalyzes the degradation of glycine. The H protein shuttles the methylamine group of glycine from the P protein to the T protein. In Methylorubrum extorquens (strain CM4 / NCIMB 13688) (Methylobacterium extorquens), this protein is Glycine cleavage system H protein.